The chain runs to 111 residues: Ferredoxin-thioredoxin reductase, catalytic chain (111 aa).

Cys52 contributes to the [4Fe-4S] cluster binding site. Cys54 acts as the Nucleophile in catalysis. Cys54 and Cys84 are joined by a disulfide. [4Fe-4S] cluster-binding residues include Cys71, Cys73, and Cys82.

The protein belongs to the ferredoxin thioredoxin reductase beta subunit family. As to quaternary structure, heterodimer of subunit A (variable subunit) and subunit B (catalytic subunit). Heterodimeric FTR forms a complex with ferredoxin and thioredoxin. [4Fe-4S] cluster serves as cofactor.

Its subcellular location is the plastid. It is found in the chloroplast. It carries out the reaction [thioredoxin]-disulfide + 2 reduced [2Fe-2S]-[ferredoxin] + 2 H(+) = [thioredoxin]-dithiol + 2 oxidized [2Fe-2S]-[ferredoxin]. Catalytic subunit of the ferredoxin-thioredoxin reductase (FTR), which catalyzes the two-electron reduction of thioredoxins by the electrons provided by reduced ferredoxin. The chain is Ferredoxin-thioredoxin reductase, catalytic chain (ftrB) from Cyanidium caldarium (Red alga).